The chain runs to 916 residues: Protein translocase subunit SecA (916 aa).

ATP-binding positions include glutamine 87, 105-109 (GEGKT), and aspartate 507. Residues cysteine 900, cysteine 902, cysteine 911, and histidine 912 each contribute to the Zn(2+) site.

It belongs to the SecA family. In terms of assembly, monomer and homodimer. Part of the essential Sec protein translocation apparatus which comprises SecA, SecYEG and auxiliary proteins SecDF-YajC and YidC. The cofactor is Zn(2+).

It is found in the cell inner membrane. The protein resides in the cytoplasm. The enzyme catalyses ATP + H2O + cellular proteinSide 1 = ADP + phosphate + cellular proteinSide 2.. Functionally, part of the Sec protein translocase complex. Interacts with the SecYEG preprotein conducting channel. Has a central role in coupling the hydrolysis of ATP to the transfer of proteins into and across the cell membrane, serving both as a receptor for the preprotein-SecB complex and as an ATP-driven molecular motor driving the stepwise translocation of polypeptide chains across the membrane. The sequence is that of Protein translocase subunit SecA from Neisseria gonorrhoeae (strain ATCC 700825 / FA 1090).